We begin with the raw amino-acid sequence, 489 residues long: Protein K15 (489 aa).

The N-terminal stretch at 1–26 (MKTLIFFWNLWLWALLVCFWCITLVC) is a signal peptide. 11 consecutive transmembrane segments (helical) span residues 29–49 (TNSI…VSAI), 63–83 (WPSS…WNLS), 89–109 (TYAC…LTLI), 121–141 (HGIL…VHMS), 148–168 (WIFF…FATV), 175–195 (LVSS…VSCC), 200–220 (CTAT…TGII), 237–257 (FLLL…LLAI), 264–284 (IKGH…LYVW), 296–316 (MLHL…VMLL), and 324–344 (ILTM…LLVF).

As to quaternary structure, interacts with host LYN; this interaction modulates B-cells signaling. Interacts with host ITSN2.

It localises to the host cell membrane. The protein localises to the host Golgi apparatus. The protein resides in the host trans-Golgi network. Plays a crucial role for reactivation of the virus from latency, early viral gene expression and virus production. Modulates host signaling pathways including activation of MAP kinases c-JUN-N-terminal kinase (JNK), ERK2, and NF-kappa-B resulting in the activation of AP-1 and NFAT-dependent gene expression in B-lymphocytes. When expressed in epithelial cells, induces the expression of several inflammatory and angiogenic genes. Also interferes with B-lymphocytes signaling through interaction with host LYN kinase. The protein is Protein K15 (K15) of Human herpesvirus 8 type P (isolate GK18) (HHV-8).